A 305-amino-acid chain; its full sequence is Mitochondrial uncoupling protein 3 (305 aa).

Solcar repeat units lie at residues 14–100 (TRIL…LKGL), 112–204 (LPLA…AKHF), and 213–299 (DNIF…FRLL). Transmembrane regions (helical) follow at residues 16–36 (ILLA…IDLT), 69–89 (VIGL…YTPI), 118–138 (ALVG…ADLV), 178–198 (KGVL…LACY), 219–239 (TLAS…ADVV), and 272–292 (WKGF…FWVS).

The protein belongs to the mitochondrial carrier (TC 2.A.29) family.

It localises to the mitochondrion inner membrane. Functionally, PUMPS are mitochondrial transporter proteins that create proton leaks across the inner mitochondrial membrane, thus uncoupling oxidative phosphorylation. This leads to a decrease in the efficiency of oxidative phosphorylation and an increase in heat production. May be involved in protecting plant cells against oxidative stress damage. In Arabidopsis thaliana (Mouse-ear cress), this protein is Mitochondrial uncoupling protein 3 (PUMP3).